We begin with the raw amino-acid sequence, 362 residues long: Peptide chain release factor 1 (362 aa).

Q235 carries the N5-methylglutamine modification.

The protein belongs to the prokaryotic/mitochondrial release factor family. In terms of processing, methylated by PrmC. Methylation increases the termination efficiency of RF1.

It localises to the cytoplasm. Peptide chain release factor 1 directs the termination of translation in response to the peptide chain termination codons UAG and UAA. This chain is Peptide chain release factor 1, found in Acinetobacter baylyi (strain ATCC 33305 / BD413 / ADP1).